We begin with the raw amino-acid sequence, 370 residues long: Spermidine/putrescine import ATP-binding protein PotA (370 aa).

An ABC transporter domain is found at 11–241; that stretch reads IELRSITKSY…PKNLFVAKFI (231 aa). 43–50 is a binding site for ATP; it reads GPSGCGKT.

Belongs to the ABC transporter superfamily. Spermidine/putrescine importer (TC 3.A.1.11.1) family. As to quaternary structure, the complex is composed of two ATP-binding proteins (PotA), two transmembrane proteins (PotB and PotC) and a solute-binding protein (PotD).

The protein resides in the cell inner membrane. The catalysed reaction is ATP + H2O + polyamine-[polyamine-binding protein]Side 1 = ADP + phosphate + polyamineSide 2 + [polyamine-binding protein]Side 1.. Functionally, part of the ABC transporter complex PotABCD involved in spermidine/putrescine import. Responsible for energy coupling to the transport system. This Pasteurella multocida (strain Pm70) protein is Spermidine/putrescine import ATP-binding protein PotA.